The chain runs to 133 residues: ATP synthase epsilon chain (133 aa).

Belongs to the ATPase epsilon chain family. As to quaternary structure, F-type ATPases have 2 components, CF(1) - the catalytic core - and CF(0) - the membrane proton channel. CF(1) has five subunits: alpha(3), beta(3), gamma(1), delta(1), epsilon(1). CF(0) has three main subunits: a, b and c.

It is found in the cell membrane. Produces ATP from ADP in the presence of a proton gradient across the membrane. The protein is ATP synthase epsilon chain of Geobacillus thermodenitrificans (strain NG80-2).